We begin with the raw amino-acid sequence, 211 residues long: Thiamine-phosphate synthase (211 aa).

4-amino-2-methyl-5-(diphosphooxymethyl)pyrimidine is bound by residues 38–42 and Asn70; that span reads QLREK. Positions 71 and 90 each coordinate Mg(2+). Position 109 (Ser109) interacts with 4-amino-2-methyl-5-(diphosphooxymethyl)pyrimidine. 135–137 is a 2-[(2R,5Z)-2-carboxy-4-methylthiazol-5(2H)-ylidene]ethyl phosphate binding site; the sequence is TST. Residue Lys138 participates in 4-amino-2-methyl-5-(diphosphooxymethyl)pyrimidine binding. Residues Gly165 and 185–186 contribute to the 2-[(2R,5Z)-2-carboxy-4-methylthiazol-5(2H)-ylidene]ethyl phosphate site; that span reads IS.

The protein belongs to the thiamine-phosphate synthase family. The cofactor is Mg(2+).

The catalysed reaction is 2-[(2R,5Z)-2-carboxy-4-methylthiazol-5(2H)-ylidene]ethyl phosphate + 4-amino-2-methyl-5-(diphosphooxymethyl)pyrimidine + 2 H(+) = thiamine phosphate + CO2 + diphosphate. The enzyme catalyses 2-(2-carboxy-4-methylthiazol-5-yl)ethyl phosphate + 4-amino-2-methyl-5-(diphosphooxymethyl)pyrimidine + 2 H(+) = thiamine phosphate + CO2 + diphosphate. It catalyses the reaction 4-methyl-5-(2-phosphooxyethyl)-thiazole + 4-amino-2-methyl-5-(diphosphooxymethyl)pyrimidine + H(+) = thiamine phosphate + diphosphate. The protein operates within cofactor biosynthesis; thiamine diphosphate biosynthesis; thiamine phosphate from 4-amino-2-methyl-5-diphosphomethylpyrimidine and 4-methyl-5-(2-phosphoethyl)-thiazole: step 1/1. Functionally, condenses 4-methyl-5-(beta-hydroxyethyl)thiazole monophosphate (THZ-P) and 2-methyl-4-amino-5-hydroxymethyl pyrimidine pyrophosphate (HMP-PP) to form thiamine monophosphate (TMP). In Clostridium acetobutylicum (strain ATCC 824 / DSM 792 / JCM 1419 / IAM 19013 / LMG 5710 / NBRC 13948 / NRRL B-527 / VKM B-1787 / 2291 / W), this protein is Thiamine-phosphate synthase.